Here is a 669-residue protein sequence, read N- to C-terminus: DNA polymerase epsilon subunit B (669 aa).

Residues 96-115 (QISTRNGSADNLAKKAERSD) form a disordered region.

The protein belongs to the DNA polymerase epsilon subunit B family. Heterotetramer. Consists of four subunits: POL2, DPB2, DPB3 and DPB4.

The protein resides in the nucleus. Its function is as follows. As accessory component of the DNA polymerase epsilon (DNA polymerase II) participates in chromosomal DNA replication. This Debaryomyces hansenii (strain ATCC 36239 / CBS 767 / BCRC 21394 / JCM 1990 / NBRC 0083 / IGC 2968) (Yeast) protein is DNA polymerase epsilon subunit B (DPB2).